We begin with the raw amino-acid sequence, 134 residues long: Large ribosomal subunit protein uL16c (134 aa).

Belongs to the universal ribosomal protein uL16 family. Part of the 50S ribosomal subunit.

Its subcellular location is the plastid. The protein localises to the chloroplast. The sequence is that of Large ribosomal subunit protein uL16c from Pinus thunbergii (Japanese black pine).